A 190-amino-acid chain; its full sequence is Small ribosomal subunit protein uS4 (190 aa).

The S4 RNA-binding domain occupies 105–181; sequence RRLQTLVYKL…RKKAKAAEGG (77 aa). The disordered stretch occupies residues 163 to 190; the sequence is GGGRPGRVRRKKAKAAEGGDGDAEEDEE. The segment covering 181–190 has biased composition (acidic residues); that stretch reads GDGDAEEDEE.

The protein belongs to the universal ribosomal protein uS4 family.

This Podospora anserina (Pleurage anserina) protein is Small ribosomal subunit protein uS4 (RPS9).